A 228-amino-acid chain; its full sequence is Response regulator SaeR (228 aa).

One can recognise a Response regulatory domain in the interval 3 to 116 (HLLIVDDEQD…ELVLRINNLL (114 aa)). At Asp-51 the chain carries 4-aspartylphosphate. The segment at residues 127 to 226 (VEQLSFDELT…VWGLGYKFER (100 aa)) is a DNA-binding region (ompR/PhoB-type).

Post-translationally, phosphorylated by SaeS.

Its subcellular location is the cytoplasm. Member of the two-component regulatory system SaeR/SaeS involved in the regulation of staphylococcal virulence factors in a strain-dependent fashion. Probably functions as a transcriptional regulator via a specific DNA-binding domain, recognizing motifs near the promoter sequences of target genes. This is Response regulator SaeR (saeR) from Staphylococcus aureus (strain USA300).